A 281-amino-acid chain; its full sequence is Pantothenate synthetase (281 aa).

Residue M29–H36 coordinates ATP. H36 (proton donor) is an active-site residue. Q60 serves as a coordination point for (R)-pantoate. Q60 provides a ligand contact to beta-alanine. An ATP-binding site is contributed by G146–D149. Residue Q152 participates in (R)-pantoate binding. ATP-binding positions include V175 and M183–R186.

Belongs to the pantothenate synthetase family. Homodimer.

Its subcellular location is the cytoplasm. It catalyses the reaction (R)-pantoate + beta-alanine + ATP = (R)-pantothenate + AMP + diphosphate + H(+). Its pathway is cofactor biosynthesis; (R)-pantothenate biosynthesis; (R)-pantothenate from (R)-pantoate and beta-alanine: step 1/1. Functionally, catalyzes the condensation of pantoate with beta-alanine in an ATP-dependent reaction via a pantoyl-adenylate intermediate. This is Pantothenate synthetase from Pseudothermotoga lettingae (strain ATCC BAA-301 / DSM 14385 / NBRC 107922 / TMO) (Thermotoga lettingae).